Here is a 231-residue protein sequence, read N- to C-terminus: Enolase-phosphatase E1 (231 aa).

Belongs to the HAD-like hydrolase superfamily. MasA/MtnC family. In terms of assembly, monomer. Mg(2+) serves as cofactor.

The catalysed reaction is 5-methylsulfanyl-2,3-dioxopentyl phosphate + H2O = 1,2-dihydroxy-5-(methylsulfanyl)pent-1-en-3-one + phosphate. The protein operates within amino-acid biosynthesis; L-methionine biosynthesis via salvage pathway; L-methionine from S-methyl-5-thio-alpha-D-ribose 1-phosphate: step 3/6. It functions in the pathway amino-acid biosynthesis; L-methionine biosynthesis via salvage pathway; L-methionine from S-methyl-5-thio-alpha-D-ribose 1-phosphate: step 4/6. Bifunctional enzyme that catalyzes the enolization of 2,3-diketo-5-methylthiopentyl-1-phosphate (DK-MTP-1-P) into the intermediate 2-hydroxy-3-keto-5-methylthiopentenyl-1-phosphate (HK-MTPenyl-1-P), which is then dephosphorylated to form the acireductone 1,2-dihydroxy-3-keto-5-methylthiopentene (DHK-MTPene). The chain is Enolase-phosphatase E1 from Stenotrophomonas maltophilia (strain K279a).